A 176-amino-acid polypeptide reads, in one-letter code: Large ribosomal subunit protein uL10 (176 aa).

This sequence belongs to the universal ribosomal protein uL10 family. In terms of assembly, part of the ribosomal stalk of the 50S ribosomal subunit. The N-terminus interacts with L11 and the large rRNA to form the base of the stalk. The C-terminus forms an elongated spine to which L12 dimers bind in a sequential fashion forming a multimeric L10(L12)X complex.

Functionally, forms part of the ribosomal stalk, playing a central role in the interaction of the ribosome with GTP-bound translation factors. This Marinobacter nauticus (strain ATCC 700491 / DSM 11845 / VT8) (Marinobacter aquaeolei) protein is Large ribosomal subunit protein uL10.